The primary structure comprises 344 residues: Phenylalanine--tRNA ligase alpha subunit (344 aa).

Position 258 (Glu258) interacts with Mg(2+).

This sequence belongs to the class-II aminoacyl-tRNA synthetase family. Phe-tRNA synthetase alpha subunit type 1 subfamily. In terms of assembly, tetramer of two alpha and two beta subunits. Mg(2+) is required as a cofactor.

The protein resides in the cytoplasm. The enzyme catalyses tRNA(Phe) + L-phenylalanine + ATP = L-phenylalanyl-tRNA(Phe) + AMP + diphosphate + H(+). This is Phenylalanine--tRNA ligase alpha subunit from Thiobacillus denitrificans (strain ATCC 25259 / T1).